The primary structure comprises 983 residues: Inner tegument protein (983 aa).

Residues 474–983 are interaction with large tegument protein; the sequence is LNVNTHFAVQ…TSVSLPPASP (510 aa). The disordered stretch occupies residues 902-932; it reads PWESAPQPPRLRMTPDTDHEESTAGATSVPE. The segment covering 914–923 has biased composition (basic and acidic residues); it reads MTPDTDHEES.

It belongs to the herpesviridae inner tegument protein family. In terms of assembly, interacts (via C-terminus) with the large tegument protein/LTP (via N-terminus).

Its subcellular location is the virion tegument. The protein localises to the host cytoplasm. It is found in the host nucleus. The protein resides in the host Golgi apparatus. It localises to the host trans-Golgi network. In terms of biological role, plays an essential role in cytoplasmic secondary envelopment during viral egress. Interacts with the capsid via the large tegument protein/LTP and participates in its transport to the host trans-Golgi network (TGN) where secondary envelopment occurs. Modulates tegumentation and capsid accumulation at the viral assembly complex. The polypeptide is Inner tegument protein (UL47) (Homo sapiens (Human)).